We begin with the raw amino-acid sequence, 217 residues long: Large ribosomal subunit protein uL3 (217 aa).

Belongs to the universal ribosomal protein uL3 family. As to quaternary structure, part of the 50S ribosomal subunit. Forms a cluster with proteins L14 and L19.

One of the primary rRNA binding proteins, it binds directly near the 3'-end of the 23S rRNA, where it nucleates assembly of the 50S subunit. The sequence is that of Large ribosomal subunit protein uL3 from Mycobacterium marinum (strain ATCC BAA-535 / M).